Here is a 78-residue protein sequence, read N- to C-terminus: Putative membrane protein insertion efficiency factor (78 aa).

The protein belongs to the UPF0161 family.

It is found in the cell inner membrane. Its function is as follows. Could be involved in insertion of integral membrane proteins into the membrane. The protein is Putative membrane protein insertion efficiency factor of Roseobacter denitrificans (strain ATCC 33942 / OCh 114) (Erythrobacter sp. (strain OCh 114)).